Reading from the N-terminus, the 149-residue chain is Large ribosomal subunit protein bL9 (149 aa).

Belongs to the bacterial ribosomal protein bL9 family.

Its function is as follows. Binds to the 23S rRNA. The polypeptide is Large ribosomal subunit protein bL9 (Salinibacter ruber (strain DSM 13855 / M31)).